The chain runs to 230 residues: Protein-L-isoaspartate O-methyltransferase (230 aa).

Serine 65 is an active-site residue.

The protein belongs to the methyltransferase superfamily. L-isoaspartyl/D-aspartyl protein methyltransferase family. In terms of assembly, monomer. In terms of tissue distribution, highest contents in seeds.

It is found in the cytoplasm. The enzyme catalyses [protein]-L-isoaspartate + S-adenosyl-L-methionine = [protein]-L-isoaspartate alpha-methyl ester + S-adenosyl-L-homocysteine. Its function is as follows. Catalyzes the methyl esterification of L-isoaspartyl residues in peptides and proteins that result from spontaneous decomposition of normal L-aspartyl and L-asparaginyl residues. It plays a role in the repair and/or degradation of damaged proteins. This enzyme does not act on D-aspartyl residues. This chain is Protein-L-isoaspartate O-methyltransferase (PCM), found in Triticum aestivum (Wheat).